A 572-amino-acid polypeptide reads, in one-letter code: Acetyl-coenzyme A synthetase (572 aa).

Threonine 260 provides a ligand contact to CoA. ATP is bound by residues glycine 333–proline 335, aspartate 354–threonine 359, aspartate 440, and arginine 455. Serine 463 is a CoA binding site. Arginine 466 lines the ATP pocket. Mg(2+) contacts are provided by valine 477, histidine 479, and isoleucine 482. Lysine 524 is a CoA binding site. Lysine 549 bears the N6-acetyllysine mark.

It belongs to the ATP-dependent AMP-binding enzyme family. In terms of assembly, interacts with FloT. Requires Mg(2+) as cofactor. In terms of processing, acetylated. Deacetylation by the SIR2-homolog deacetylase activates the enzyme.

The protein resides in the cell membrane. It is found in the membrane raft. The catalysed reaction is acetate + ATP + CoA = acetyl-CoA + AMP + diphosphate. Its function is as follows. Catalyzes the conversion of acetate into acetyl-CoA (AcCoA), an essential intermediate at the junction of anabolic and catabolic pathways. AcsA undergoes a two-step reaction. In the first half reaction, AcsA combines acetate with ATP to form acetyl-adenylate (AcAMP) intermediate. In the second half reaction, it can then transfer the acetyl group from AcAMP to the sulfhydryl group of CoA, forming the product AcCoA. Has a role in growth and sporulation on acetate. The protein is Acetyl-coenzyme A synthetase (acsA) of Bacillus subtilis (strain 168).